The sequence spans 146 residues: D-aminoacyl-tRNA deacylase (146 aa).

Residues 137-138 (GP) carry the Gly-cisPro motif, important for rejection of L-amino acids motif.

Belongs to the DTD family. In terms of assembly, homodimer.

It localises to the cytoplasm. The catalysed reaction is glycyl-tRNA(Ala) + H2O = tRNA(Ala) + glycine + H(+). It catalyses the reaction a D-aminoacyl-tRNA + H2O = a tRNA + a D-alpha-amino acid + H(+). In terms of biological role, an aminoacyl-tRNA editing enzyme that deacylates mischarged D-aminoacyl-tRNAs. Also deacylates mischarged glycyl-tRNA(Ala), protecting cells against glycine mischarging by AlaRS. Acts via tRNA-based rather than protein-based catalysis; rejects L-amino acids rather than detecting D-amino acids in the active site. By recycling D-aminoacyl-tRNA to D-amino acids and free tRNA molecules, this enzyme counteracts the toxicity associated with the formation of D-aminoacyl-tRNA entities in vivo and helps enforce protein L-homochirality. In Bacillus cereus (strain B4264), this protein is D-aminoacyl-tRNA deacylase.